The following is a 289-amino-acid chain: Shikimate dehydrogenase (NADP(+)) (289 aa).

Residues 19–21 (SLS) and T66 contribute to the shikimate site. The Proton acceptor role is filled by K70. 2 residues coordinate shikimate: N91 and D106. NADP(+) contacts are provided by residues 131-135 (GNGGA) and L229. Y231 contacts shikimate. Residue G252 participates in NADP(+) binding.

It belongs to the shikimate dehydrogenase family. In terms of assembly, homodimer.

It carries out the reaction shikimate + NADP(+) = 3-dehydroshikimate + NADPH + H(+). Its pathway is metabolic intermediate biosynthesis; chorismate biosynthesis; chorismate from D-erythrose 4-phosphate and phosphoenolpyruvate: step 4/7. Functionally, involved in the biosynthesis of the chorismate, which leads to the biosynthesis of aromatic amino acids. Catalyzes the reversible NADPH linked reduction of 3-dehydroshikimate (DHSA) to yield shikimate (SA). The sequence is that of Shikimate dehydrogenase (NADP(+)) from Trichormus variabilis (strain ATCC 29413 / PCC 7937) (Anabaena variabilis).